Here is a 471-residue protein sequence, read N- to C-terminus: Argininosuccinate lyase (471 aa).

The protein belongs to the lyase 1 family. Argininosuccinate lyase subfamily.

Its subcellular location is the cytoplasm. The catalysed reaction is 2-(N(omega)-L-arginino)succinate = fumarate + L-arginine. It functions in the pathway amino-acid biosynthesis; L-arginine biosynthesis; L-arginine from L-ornithine and carbamoyl phosphate: step 3/3. The sequence is that of Argininosuccinate lyase from Ehrlichia canis (strain Jake).